We begin with the raw amino-acid sequence, 46 residues long: uncharacterized protein (46 aa).

This is an uncharacterized protein from Escherichia coli.